We begin with the raw amino-acid sequence, 246 residues long: Bromelain inhibitor (246 aa).

A signal peptide spans 1-19; that stretch reads MNMLLLFLHEVINGERVTL. Disulfide bonds link Cys22–Cys42, Cys25–Cys74, Cys27–Cys40, Cys49–Cys56, and Cys53–Cys65. A propeptide spanning residues 31–35 is cleaved from the precursor; that stretch reads TSSSD. Propeptides lie at residues 77–95 and 107–111; these read PVSSSEAKQKMIKGERVTL and TSSSD. Cystine bridges form between Cys98/Cys118, Cys101/Cys150, Cys103/Cys116, Cys125/Cys132, and Cys129/Cys141. 2 consecutive propeptides follow at residues 153–171 and 183–187; these read PVSSLEAKQNMIKEERVTL and TSSSD. 5 cysteine pairs are disulfide-bonded: Cys174–Cys194, Cys177–Cys226, Cys179–Cys192, Cys201–Cys208, and Cys205–Cys217. A propeptide spanning residues 229–246 is cleaved from the precursor; that stretch reads PVSSWEARQKIKLLQGRE.

The protein belongs to the protease inhibitor I67 family. Each inhibitor is composed of two chains, designated A and B linked by three disulfide bonds.

Its function is as follows. Weak inhibitor of cysteine proteinases. The protein is Bromelain inhibitor of Ananas comosus (Pineapple).